The following is a 278-amino-acid chain: 4-deoxy-L-threo-5-hexosulose-uronate ketol-isomerase (278 aa).

The Zn(2+) site is built by His196, His198, Glu203, and His245.

This sequence belongs to the KduI family. Zn(2+) serves as cofactor.

The enzyme catalyses 5-dehydro-4-deoxy-D-glucuronate = 3-deoxy-D-glycero-2,5-hexodiulosonate. It functions in the pathway glycan metabolism; pectin degradation; 2-dehydro-3-deoxy-D-gluconate from pectin: step 4/5. Catalyzes the isomerization of 5-dehydro-4-deoxy-D-glucuronate to 3-deoxy-D-glycero-2,5-hexodiulosonate. This Shigella sonnei (strain Ss046) protein is 4-deoxy-L-threo-5-hexosulose-uronate ketol-isomerase.